Here is a 98-residue protein sequence, read N- to C-terminus: YcgL domain-containing protein CJA_2437 (98 aa).

Residues 3–87 enclose the YcgL domain; it reads IIAEIYRSPK…RDLVDAEAKR (85 aa).

The sequence is that of YcgL domain-containing protein CJA_2437 from Cellvibrio japonicus (strain Ueda107) (Pseudomonas fluorescens subsp. cellulosa).